The primary structure comprises 359 residues: MVDIIFHYPFLGAMGDHSKKKPGTAMCVGCGSQIHDQFILRVSPDLEWHAACLKCAECSQYLDETCTCFVRDGKTYCKRDYVRLFGIKCAQCQVGFSSSDLVMRARDSVYHIECFRCSVCSRQLLPGDEFSLREHELLCRADHGLLLERAAAGSPRSPGPLPGARGLHLPDAGSGRQPSLRTHVHKQAEKTTRVRTVLNEKQLHTLRTCYAANPRPDALMKEQLVEMTGLSPRVIRVWFQNKRCKDKKKSILMKQLQQQQHSDKASLQGLTGTPLVAGSPIRHENAVQGSAVEVQTYQPPWKALSEFALQSDLDQPAFQQLVSFSESGSLGNSSGSDVTSLSSQLPDTPNSMVPSPVET.

2 consecutive LIM zinc-binding domains span residues 25 to 86 (AMCV…RLFG) and 87 to 149 (IKCA…LLER). The disordered stretch occupies residues 151-190 (AAGSPRSPGPLPGARGLHLPDAGSGRQPSLRTHVHKQAEK). Residues Ser154 and Ser157 each carry the phosphoserine modification. The homeobox DNA-binding region spans 191-250 (TTRVRTVLNEKQLHTLRTCYAANPRPDALMKEQLVEMTGLSPRVIRVWFQNKRCKDKKKS). Residues 272 to 301 (GTPLVAGSPIRHENAVQGSAVEVQTYQPPW) are LIM-binding domain (LID). Position 279 is a phosphoserine (Ser279). Positions 326-336 (ESGSLGNSSGS) are enriched in low complexity. Residues 326 to 359 (ESGSLGNSSGSDVTSLSSQLPDTPNSMVPSPVET) form a disordered region. Polar residues predominate over residues 337–359 (DVTSLSSQLPDTPNSMVPSPVET).

Interacts with LHX4.

The protein resides in the nucleus. Its function is as follows. Transcriptional factor that defines subclasses of motoneurons that segregate into columns in the spinal cord and select distinct axon pathways. This Mus musculus (Mouse) protein is Insulin gene enhancer protein ISL-2 (Isl2).